The chain runs to 160 residues: Fluoride-specific ion channel FluC (160 aa).

4 helical membrane-spanning segments follow: residues 5-25 (LFISYGAILGASLRWAIGLLF), 34-54 (FGTLIANLFGCLIIGVLLGLF), 67-87 (FLITGFLGSLTTFSSFSSEVV), and 99-119 (FCVLMMHLFGCLAMTVLGIWI). Glycine 74 and threonine 77 together coordinate Na(+).

Belongs to the fluoride channel Fluc/FEX (TC 1.A.43) family.

The protein resides in the cell inner membrane. It catalyses the reaction fluoride(in) = fluoride(out). Na(+) is not transported, but it plays an essential structural role and its presence is essential for fluoride channel function. Functionally, fluoride-specific ion channel. Important for reducing fluoride concentration in the cell, thus reducing its toxicity. The polypeptide is Fluoride-specific ion channel FluC (Haemophilus influenzae (strain ATCC 51907 / DSM 11121 / KW20 / Rd)).